A 273-amino-acid polypeptide reads, in one-letter code: Small ribosomal subunit protein uS2 (273 aa).

Residues 244–273 (SDEEANSSAEENENRQEDLLAKKYDSSEAN) are disordered. A compositionally biased stretch (basic and acidic residues) spans 255-273 (NENRQEDLLAKKYDSSEAN).

The protein belongs to the universal ribosomal protein uS2 family.

The chain is Small ribosomal subunit protein uS2 from Chlamydia felis (strain Fe/C-56) (Chlamydophila felis).